Consider the following 395-residue polypeptide: S-adenosylmethionine synthase (395 aa).

Histidine 18 lines the ATP pocket. Residue aspartate 20 participates in Mg(2+) binding. Residue glutamate 46 coordinates K(+). L-methionine contacts are provided by glutamate 59 and glutamine 103. Positions 103–113 are flexible loop; that stretch reads QSADIAVGVDS. Residues 170 to 172, 235 to 236, aspartate 244, 250 to 251, alanine 267, and lysine 271 each bind ATP; these read DAK, KF, and RK. Aspartate 244 is a binding site for L-methionine. An L-methionine-binding site is contributed by lysine 275.

It belongs to the AdoMet synthase family. In terms of assembly, homotetramer; dimer of dimers. Mg(2+) serves as cofactor. The cofactor is K(+).

It localises to the cytoplasm. It catalyses the reaction L-methionine + ATP + H2O = S-adenosyl-L-methionine + phosphate + diphosphate. It functions in the pathway amino-acid biosynthesis; S-adenosyl-L-methionine biosynthesis; S-adenosyl-L-methionine from L-methionine: step 1/1. In terms of biological role, catalyzes the formation of S-adenosylmethionine (AdoMet) from methionine and ATP. The overall synthetic reaction is composed of two sequential steps, AdoMet formation and the subsequent tripolyphosphate hydrolysis which occurs prior to release of AdoMet from the enzyme. The sequence is that of S-adenosylmethionine synthase from Granulibacter bethesdensis (strain ATCC BAA-1260 / CGDNIH1).